We begin with the raw amino-acid sequence, 462 residues long: Bifunctional dihydrofolate reductase-thymidylate synthase (462 aa).

Positions 6-165 (TFSMVLAMTL…INYDYQHLIN (160 aa)) constitute a DHFR domain. Val10 serves as a coordination point for substrate. NADP(+) is bound by residues Ala12 and 18–24 (GIGYQNR). Residue Asp32 coordinates substrate. NADP(+)-binding positions include 49-51 (RKT) and 68-71 (ISKN). Ile101 serves as a coordination point for substrate. 102 to 109 (GGKRIFEE) is a binding site for NADP(+). Thr122 provides a ligand contact to substrate. A thymidylate synthase region spans residues 180–462 (ENQYLDMITK…HDKIEMKMAV (283 aa)). DUMP is bound at residue Arg200. Residue Cys345 is part of the active site. DUMP-binding positions include His346, 364–368 (QRSCD), Asn376, and 406–408 (HIY).

It in the N-terminal section; belongs to the dihydrofolate reductase family. In the C-terminal section; belongs to the thymidylate synthase family.

The enzyme catalyses (6S)-5,6,7,8-tetrahydrofolate + NADP(+) = 7,8-dihydrofolate + NADPH + H(+). It carries out the reaction dUMP + (6R)-5,10-methylene-5,6,7,8-tetrahydrofolate = 7,8-dihydrofolate + dTMP. It participates in cofactor biosynthesis; tetrahydrofolate biosynthesis; 5,6,7,8-tetrahydrofolate from 7,8-dihydrofolate: step 1/1. In terms of biological role, bifunctional enzyme. Involved in de novo dTMP biosynthesis. Key enzyme in folate metabolism. Catalyzes an essential reaction for de novo glycine and purine synthesis, DNA precursor synthesis, and for the conversion of dUMP to dTMP. The protein is Bifunctional dihydrofolate reductase-thymidylate synthase of Paramecium tetraurelia.